The chain runs to 333 residues: Phosphate acyltransferase (333 aa).

It belongs to the PlsX family. In terms of assembly, homodimer. Probably interacts with PlsY.

The protein resides in the cytoplasm. It carries out the reaction a fatty acyl-[ACP] + phosphate = an acyl phosphate + holo-[ACP]. It participates in lipid metabolism; phospholipid metabolism. Catalyzes the reversible formation of acyl-phosphate (acyl-PO(4)) from acyl-[acyl-carrier-protein] (acyl-ACP). This enzyme utilizes acyl-ACP as fatty acyl donor, but not acyl-CoA. This is Phosphate acyltransferase from Lactobacillus acidophilus (strain ATCC 700396 / NCK56 / N2 / NCFM).